The sequence spans 589 residues: O-fucosyltransferase 11 (589 aa).

The segment at 1-37 is disordered; sequence MKSKIHHQPNGSNNGVVSSNDNGCRSESPSPPLSPNR. Residues 10 to 23 show a composition bias toward low complexity; the sequence is NGSNNGVVSSNDNG. A helical; Signal-anchor for type II membrane protein transmembrane segment spans residues 68–88; that stretch reads MIYASGLLMCVGPFSGLVGWV. 3 N-linked (GlcNAc...) asparagine glycosylation sites follow: N112, N136, and N239. 332–334 is a substrate binding site; the sequence is HLR. N405, N406, and N564 each carry an N-linked (GlcNAc...) asparagine glycan.

This sequence belongs to the glycosyltransferase GT106 family.

It localises to the membrane. Its pathway is glycan metabolism. The sequence is that of O-fucosyltransferase 11 from Arabidopsis thaliana (Mouse-ear cress).